The following is a 290-amino-acid chain: Lipoyl synthase (290 aa).

The [4Fe-4S] cluster site is built by Cys32, Cys37, Cys43, Cys58, Cys62, Cys65, and Ser272. The Radical SAM core domain occupies 44–261; sequence WGEGTATFMI…KEVAVSLGFK (218 aa).

The protein belongs to the radical SAM superfamily. Lipoyl synthase family. [4Fe-4S] cluster is required as a cofactor.

The protein resides in the cytoplasm. It catalyses the reaction [[Fe-S] cluster scaffold protein carrying a second [4Fe-4S](2+) cluster] + N(6)-octanoyl-L-lysyl-[protein] + 2 oxidized [2Fe-2S]-[ferredoxin] + 2 S-adenosyl-L-methionine + 4 H(+) = [[Fe-S] cluster scaffold protein] + N(6)-[(R)-dihydrolipoyl]-L-lysyl-[protein] + 4 Fe(3+) + 2 hydrogen sulfide + 2 5'-deoxyadenosine + 2 L-methionine + 2 reduced [2Fe-2S]-[ferredoxin]. The protein operates within protein modification; protein lipoylation via endogenous pathway; protein N(6)-(lipoyl)lysine from octanoyl-[acyl-carrier-protein]: step 2/2. Catalyzes the radical-mediated insertion of two sulfur atoms into the C-6 and C-8 positions of the octanoyl moiety bound to the lipoyl domains of lipoate-dependent enzymes, thereby converting the octanoylated domains into lipoylated derivatives. In Pyrobaculum aerophilum (strain ATCC 51768 / DSM 7523 / JCM 9630 / CIP 104966 / NBRC 100827 / IM2), this protein is Lipoyl synthase.